The chain runs to 352 residues: Transcription factor MYB51 (352 aa).

2 consecutive HTH myb-type domains span residues 10–62 (ELGL…ANYL) and 63–117 (RPDI…KKRL). DNA-binding regions (H-T-H motif) lie at residues 38–62 (WRTL…ANYL) and 90–113 (WSAI…NTHI). 2 disordered regions span residues 128-157 (KGIT…DLDN) and 198-219 (GGPL…SVDS). The span at 203–219 (STSHTTNTTTTSVSVDS) shows a compositional bias: low complexity.

Can form complexes with MYC2, MYC3 or MYC4. Expressed in vegetative parts of the plant, mainly in mature rosette leaves and in trichomes. Detected in roots, but not in mature flowers or siliques.

The protein resides in the nucleus. Transcription factor positively regulating indolic glucosinolate biosynthetic pathway genes. This Arabidopsis thaliana (Mouse-ear cress) protein is Transcription factor MYB51 (MYB51).